A 430-amino-acid polypeptide reads, in one-letter code: Asparagine--tRNA ligase (430 aa).

This sequence belongs to the class-II aminoacyl-tRNA synthetase family. In terms of assembly, homodimer.

It is found in the cytoplasm. It catalyses the reaction tRNA(Asn) + L-asparagine + ATP = L-asparaginyl-tRNA(Asn) + AMP + diphosphate + H(+). The sequence is that of Asparagine--tRNA ligase from Listeria innocua serovar 6a (strain ATCC BAA-680 / CLIP 11262).